A 251-amino-acid chain; its full sequence is Hydroxyacylglutathione hydrolase (251 aa).

Zn(2+) contacts are provided by histidine 53, histidine 55, aspartate 57, histidine 58, histidine 110, aspartate 127, and histidine 165.

Belongs to the metallo-beta-lactamase superfamily. Glyoxalase II family. As to quaternary structure, monomer. It depends on Zn(2+) as a cofactor.

It catalyses the reaction an S-(2-hydroxyacyl)glutathione + H2O = a 2-hydroxy carboxylate + glutathione + H(+). It participates in secondary metabolite metabolism; methylglyoxal degradation; (R)-lactate from methylglyoxal: step 2/2. Functionally, thiolesterase that catalyzes the hydrolysis of S-D-lactoyl-glutathione to form glutathione and D-lactic acid. This chain is Hydroxyacylglutathione hydrolase, found in Pectobacterium carotovorum subsp. carotovorum (strain PC1).